Reading from the N-terminus, the 243-residue chain is Orotidine 5'-phosphate decarboxylase (243 aa).

Substrate-binding positions include aspartate 12, lysine 34, aspartate 61–threonine 70, threonine 125, arginine 187, glutamine 196, glycine 216, and arginine 217. Catalysis depends on lysine 63, which acts as the Proton donor.

This sequence belongs to the OMP decarboxylase family. Type 1 subfamily. As to quaternary structure, homodimer.

It catalyses the reaction orotidine 5'-phosphate + H(+) = UMP + CO2. Its pathway is pyrimidine metabolism; UMP biosynthesis via de novo pathway; UMP from orotate: step 2/2. In terms of biological role, catalyzes the decarboxylation of orotidine 5'-monophosphate (OMP) to uridine 5'-monophosphate (UMP). This is Orotidine 5'-phosphate decarboxylase from Heliobacterium modesticaldum (strain ATCC 51547 / Ice1).